Reading from the N-terminus, the 94-residue chain is Co-chaperonin GroES (94 aa).

The protein belongs to the GroES chaperonin family. As to quaternary structure, heptamer of 7 subunits arranged in a ring. Interacts with the chaperonin GroEL.

The protein resides in the cytoplasm. Together with the chaperonin GroEL, plays an essential role in assisting protein folding. The GroEL-GroES system forms a nano-cage that allows encapsulation of the non-native substrate proteins and provides a physical environment optimized to promote and accelerate protein folding. GroES binds to the apical surface of the GroEL ring, thereby capping the opening of the GroEL channel. The protein is Co-chaperonin GroES of Streptococcus pneumoniae (strain ATCC 700669 / Spain 23F-1).